The primary structure comprises 602 residues: uncharacterized protein (602 aa).

Belongs to the glycosyltransferase 2 family.

This is an uncharacterized protein from Rickettsia felis (strain ATCC VR-1525 / URRWXCal2) (Rickettsia azadi).